Here is a 193-residue protein sequence, read N- to C-terminus: Ion-translocating oxidoreductase complex subunit A (193 aa).

A run of 6 helical transmembrane segments spans residues 5 to 25, 47 to 67, 72 to 92, 102 to 122, 134 to 154, and 171 to 191; these read LLLFVGTVLVNNFVLVKFLGL, FVMTLASVSAWVINTFILVPL, LRTLSFILVIAVVVQFTEMVV, LLGIFLPLITTNCAVLGVALL, AVYGFSAAAGFSLVMVLFAAI, and SIALITAGLMSLAFMGFTGLV.

It belongs to the NqrDE/RnfAE family. As to quaternary structure, the complex is composed of six subunits: RnfA, RnfB, RnfC, RnfD, RnfE and RnfG.

It is found in the cell inner membrane. Functionally, part of a membrane-bound complex that couples electron transfer with translocation of ions across the membrane. This Serratia proteamaculans (strain 568) protein is Ion-translocating oxidoreductase complex subunit A.